A 295-amino-acid polypeptide reads, in one-letter code: Signal-transducing adaptor protein 1 (295 aa).

Residues 25–121 enclose the PH domain; the sequence is PLYFEGFLLI…WRGFILTVTE (97 aa). A Phosphotyrosine modification is found at Y168. Residues 177-280 enclose the SH2 domain; the sequence is ACFYTVSRKE…TDENTGQEPS (104 aa). A disordered region spans residues 270-295; that stretch reads STDENTGQEPSMEGRSEKLKKNPHIA.

In terms of assembly, interacts with KIT and CSF1R. Interacts with URI1; the interaction is phosphorylation-dependent and occurs in a growth-dependent manner. Post-translationally, phosphorylated on tyrosine by TEC. Phosphorylated on tyrosine by KIT.

The protein localises to the nucleus. It localises to the cytoplasm. It is found in the mitochondrion. In BCR signaling, appears to function as a docking protein acting downstream of TEC and participates in a positive feedback loop by increasing the activity of TEC. The polypeptide is Signal-transducing adaptor protein 1 (STAP1) (Homo sapiens (Human)).